We begin with the raw amino-acid sequence, 494 residues long: Glycerol kinase (494 aa).

Thr12 is an ADP binding site. ATP-binding residues include Thr12, Thr13, and Ser14. Residue Thr12 coordinates sn-glycerol 3-phosphate. Arg16 provides a ligand contact to ADP. Arg82, Glu83, Tyr134, and Asp243 together coordinate sn-glycerol 3-phosphate. Residues Arg82, Glu83, Tyr134, Asp243, and Gln244 each coordinate glycerol. ADP is bound by residues Thr265 and Gly308. ATP-binding residues include Thr265, Gly308, Gln312, and Gly408. Positions 408 and 412 each coordinate ADP.

It belongs to the FGGY kinase family.

It catalyses the reaction glycerol + ATP = sn-glycerol 3-phosphate + ADP + H(+). It participates in polyol metabolism; glycerol degradation via glycerol kinase pathway; sn-glycerol 3-phosphate from glycerol: step 1/1. Its activity is regulated as follows. Inhibited by fructose 1,6-bisphosphate (FBP). In terms of biological role, key enzyme in the regulation of glycerol uptake and metabolism. Catalyzes the phosphorylation of glycerol to yield sn-glycerol 3-phosphate. The protein is Glycerol kinase of Marinomonas sp. (strain MWYL1).